A 404-amino-acid polypeptide reads, in one-letter code: Propionate kinase (404 aa).

Belongs to the acetokinase family. PduW subfamily.

It is found in the cytoplasm. It catalyses the reaction propanoate + ATP = propanoyl phosphate + ADP. It functions in the pathway polyol metabolism; 1,2-propanediol degradation. Works with phosphate acetyltransferase (pta) to capture exogenous propionate and regenerate propionyl-CoA during degradation of 1,2-propanediol (1,2-PD). Functionally, expression of a cosmid containing the full 21-gene pdu operon in E.coli allows E.coli to grow on 1,2-propanediol (1,2-PD) with the appearance of bacterial microcompartments (BMC) in its cytoplasm. The chain is Propionate kinase from Citrobacter freundii.